The chain runs to 295 residues: Nucleotide-binding protein CMS1991 (295 aa).

19 to 26 contacts ATP; sequence GMSGAGRS. Position 70 to 73 (70 to 73) interacts with GTP; that stretch reads DVRG.

The protein belongs to the RapZ-like family.

Displays ATPase and GTPase activities. This chain is Nucleotide-binding protein CMS1991, found in Clavibacter sepedonicus (Clavibacter michiganensis subsp. sepedonicus).